The primary structure comprises 129 residues: L-ectoine synthase (129 aa).

It belongs to the ectoine synthase family.

The enzyme catalyses (2S)-4-acetamido-2-aminobutanoate = L-ectoine + H2O. Its pathway is amine and polyamine biosynthesis; ectoine biosynthesis; L-ectoine from L-aspartate 4-semialdehyde: step 3/3. Catalyzes the circularization of gamma-N-acetyl-alpha,gamma-diaminobutyric acid (ADABA) to ectoine (1,4,5,6-tetrahydro-2-methyl-4-pyrimidine carboxylic acid), which is an excellent osmoprotectant. The sequence is that of L-ectoine synthase from Mycobacterium sp. (strain KMS).